A 108-amino-acid chain; its full sequence is U-scoloptoxin(10)-Sm1a (108 aa).

The first 24 residues, 1 to 24 (MNKQWLHFFSVLLLCYVIEETCSL), serve as a signal peptide directing secretion.

It belongs to the scoloptoxin-10 family. In terms of processing, contains 3 disulfide bonds. Expressed by the venom gland.

Its subcellular location is the secreted. The sequence is that of U-scoloptoxin(10)-Sm1a from Scolopendra morsitans (Tanzanian blue ringleg centipede).